The primary structure comprises 196 residues: FAD-linked sulfhydryl oxidase ERV2 (196 aa).

Topologically, residues 1–12 (MKQIVKRSHAIR) are cytoplasmic. A helical; Signal-anchor membrane pass occupies residues 13 to 35 (IVAALGIIGLWMFFSSNELSIAT). The Lumenal portion of the chain corresponds to 36–196 (PGLIKAKSGI…SLEKEAKQHG (161 aa)). An ERV/ALR sulfhydryl oxidase domain is found at 72-174 (MGDDKVKKEV…YDCATILEDY (103 aa)). The FAD site is built by K78, R83, and W86. C121 and C124 are joined by a disulfide. Residues H127, C150, H153, N157, K162, and Y174 each contribute to the FAD site. C150 and C167 form a disulfide bridge. A disulfide bond links C176 and C178.

As to quaternary structure, homodimer. Interacts with the substrate protein PDI1, forming transient intermolecular disulfide bridges. Requires FAD as cofactor.

It is found in the endoplasmic reticulum membrane. The enzyme catalyses 2 R'C(R)SH + O2 = R'C(R)S-S(R)CR' + H2O2. Functionally, FAD-dependent sulfhydryl oxidase that catalyzes disulfide bond formation in the endoplasmic reticulum lumen in parallel to ERO1. The chain is FAD-linked sulfhydryl oxidase ERV2 (ERV2) from Saccharomyces cerevisiae (strain ATCC 204508 / S288c) (Baker's yeast).